Here is a 172-residue protein sequence, read N- to C-terminus: R-phycocyanin beta subunit (172 aa).

Asn72 is modified (N4-methylasparagine). Cys82 serves as a coordination point for (2R,3E)-phycocyanobilin. Cys153 contributes to the (2R,3E)-phycoerythrobilin binding site.

This sequence belongs to the phycobiliprotein family. Heterodimer of an alpha and a beta subunit, which further assembles into trimers and the trimers into hexamers. Contains two covalently linked bilin chromophores.

Its subcellular location is the cellular thylakoid membrane. Its function is as follows. Light-harvesting photosynthetic bile pigment-protein from the phycobiliprotein complex (phycobilisome, PBS). Phycocyanin is the major phycobiliprotein in the PBS rod. This Synechococcus sp. (strain WH7803) protein is R-phycocyanin beta subunit (rpcB).